The chain runs to 289 residues: Serine/threonine-protein phosphatase Pgam5, mitochondrial (289 aa).

Residues 7-23 (LVCGAGAGLAAFYLSRL) form a helical membrane-spanning segment.

Belongs to the phosphoglycerate mutase family. BPG-dependent PGAM subfamily. Interacts with Pk92B/ASK1.

The protein localises to the mitochondrion outer membrane. It carries out the reaction O-phospho-L-seryl-[protein] + H2O = L-seryl-[protein] + phosphate. The catalysed reaction is O-phospho-L-threonyl-[protein] + H2O = L-threonyl-[protein] + phosphate. In terms of biological role, displays phosphatase activity for serine/threonine residues, and dephosphorylates and activates Pk92B kinase. Has apparently no phosphoglycerate mutase activity. The protein is Serine/threonine-protein phosphatase Pgam5, mitochondrial of Drosophila ananassae (Fruit fly).